Reading from the N-terminus, the 151-residue chain is Internal scaffolding protein VP3 (151 aa).

The segment at 120–151 (VETPQQAPQSTTNQTTTKPAPASGEPTPVPTP) is disordered. Residues 122–137 (TPQQAPQSTTNQTTTK) are compositionally biased toward polar residues.

Belongs to the microvidae B protein family.

It localises to the host cytoplasm. Functionally, participates in the assembly of the viral procapsid in the cytoplasm. Internal scaffolding protein VP3 is released from the procapsid upon genome packaging, possibly through affinity displacement by the protein VP8, or by proteolysis. The chain is Internal scaffolding protein VP3 from Bdellovibrio bacteriovorus (Bacteriophage phiMH2K).